The sequence spans 185 residues: Signal peptidase complex subunit 3 (185 aa).

The Cytoplasmic segment spans residues 1-16 (MHTSIQRIQQTFSQAS). Residues 17–37 (TVLSIIAAIVFVVSYIQLVVA) form a helical; Signal-anchor for type II membrane protein membrane-spanning segment. The Lumenal portion of the chain corresponds to 38–185 (NVWSLPEANF…KGSIKFPQLV (148 aa)). Asn-151 carries N-linked (GlcNAc...) asparagine glycosylation.

This sequence belongs to the SPCS3 family. In terms of assembly, component of the signal peptidase complex (SPC) composed of a catalytic subunit SEC11 and three accessory subunits SPC1, SPC2 and SPC3. The complex induces a local thinning of the ER membrane which is used to measure the length of the signal peptide (SP) h-region of protein substrates. This ensures the selectivity of the complex towards h-regions shorter than 18-20 amino acids. SPC associates with the translocon complex.

It localises to the endoplasmic reticulum membrane. Functionally, essential component of the signal peptidase complex (SPC) which catalyzes the cleavage of N-terminal signal sequences from nascent proteins as they are translocated into the lumen of the endoplasmic reticulum. Essential for the SPC catalytic activity, possibly by stabilizing and positioning the active center of the complex close to the lumenal surface. Essential for viability. The polypeptide is Signal peptidase complex subunit 3 (SPC3) (Yarrowia lipolytica (strain CLIB 122 / E 150) (Yeast)).